A 726-amino-acid chain; its full sequence is Catalase-peroxidase (726 aa).

Positions 1-33 (MSTSDDIHNTTATGKCPFHQGGHDQSAGAGTTT) are disordered. A cross-link (tryptophyl-tyrosyl-methioninium (Trp-Tyr) (with M-252)) is located at residues 105–226 (WHGAGTYRSI…LGATEMGLIY (122 aa)). The Proton acceptor role is filled by His106. Positions 226–252 (YVNPEGPDHSGEPLSAAAAIRATFGNM) form a cross-link, tryptophyl-tyrosyl-methioninium (Tyr-Met) (with W-105). His267 is a heme b binding site.

The protein belongs to the peroxidase family. Peroxidase/catalase subfamily. As to quaternary structure, homodimer or homotetramer. The cofactor is heme b. Post-translationally, formation of the three residue Trp-Tyr-Met cross-link is important for the catalase, but not the peroxidase activity of the enzyme.

The catalysed reaction is H2O2 + AH2 = A + 2 H2O. It catalyses the reaction 2 H2O2 = O2 + 2 H2O. Functionally, bifunctional enzyme with both catalase and broad-spectrum peroxidase activity. This is Catalase-peroxidase from Escherichia coli (strain K12 / DH10B).